Reading from the N-terminus, the 149-residue chain is Ribonuclease HI (149 aa).

The RNase H type-1 domain occupies 1–140 (MIIGYFDGLC…AYELVRRGKL (140 aa)). Mg(2+)-binding residues include Asp-7, Glu-52, Asp-76, and Asp-125. The Mn(2+) site is built by Asp-7, Glu-52, Asp-76, and Asp-125. Cys-58 and Cys-145 are disulfide-bonded.

As to quaternary structure, monomer. Mn(2+) is required as a cofactor. It depends on Mg(2+) as a cofactor. The cofactor is Co(2+). Requires Ni(2+) as cofactor. Post-translationally, the disulfide bond confers considerable stability to the protein.

Its subcellular location is the cytoplasm. The catalysed reaction is Endonucleolytic cleavage to 5'-phosphomonoester.. In terms of biological role, nuclease that specifically degrades the RNA of RNA-DNA hybrids. Endonucleolytically removes RNA primers from the Okazaki fragments of lagging strand synthesis on its own. In the presence of Mn(2+) or Co(2+) can also cleave an RNA-RNA hybrid; the dsRNase activity is 10- 100-fold lower than RNase H activity. Complements the temperature-sensitive phenotype of an E.coli double rnhA/rnhB (RNase H) disruption mutant. The polypeptide is Ribonuclease HI (rnhA) (Sulfurisphaera tokodaii (strain DSM 16993 / JCM 10545 / NBRC 100140 / 7) (Sulfolobus tokodaii)).